A 533-amino-acid chain; its full sequence is NEDD8-activating enzyme E1 regulatory subunit (533 aa).

The interaction with uba3 stretch occupies residues 330–343 (DMIADSDKFIKLQN).

Belongs to the ubiquitin-activating E1 family. ULA1 subfamily. In terms of assembly, heterodimer of uba3 and nae1. The complex binds nedd8 and ube2m.

Its pathway is protein modification; protein neddylation. Its function is as follows. Regulatory subunit of the dimeric uba3-nae1 E1 enzyme. E1 activates nedd8 by first adenylating its C-terminal glycine residue with ATP, thereafter linking this residue to the side chain of the catalytic cysteine, yielding a nedd8-uba3 thioester and free AMP. E1 finally transfers nedd8 to the catalytic cysteine of ube2m. The covalent attachment of nedd8 to target proteins is known as 'neddylation' and the process is involved in the regulation of cell growth, viability and development. This chain is NEDD8-activating enzyme E1 regulatory subunit (nae1), found in Danio rerio (Zebrafish).